The primary structure comprises 367 residues: Queuine tRNA-ribosyltransferase (367 aa).

Asp91 functions as the Proton acceptor in the catalytic mechanism. Residues 91-95, Asp145, Gln188, and Gly215 each bind substrate; that span reads DSGGF. The active-site Nucleophile is Asp265. The segment at 270–274 is RNA binding; important for wobble base 34 recognition; sequence TRVAR. Cys303, Cys305, Cys308, and His334 together coordinate Zn(2+).

The protein belongs to the queuine tRNA-ribosyltransferase family. As to quaternary structure, homodimer. Within each dimer, one monomer is responsible for RNA recognition and catalysis, while the other monomer binds to the replacement base PreQ1. The cofactor is Zn(2+).

The catalysed reaction is 7-aminomethyl-7-carbaguanine + guanosine(34) in tRNA = 7-aminomethyl-7-carbaguanosine(34) in tRNA + guanine. It functions in the pathway tRNA modification; tRNA-queuosine biosynthesis. Functionally, catalyzes the base-exchange of a guanine (G) residue with the queuine precursor 7-aminomethyl-7-deazaguanine (PreQ1) at position 34 (anticodon wobble position) in tRNAs with GU(N) anticodons (tRNA-Asp, -Asn, -His and -Tyr). Catalysis occurs through a double-displacement mechanism. The nucleophile active site attacks the C1' of nucleotide 34 to detach the guanine base from the RNA, forming a covalent enzyme-RNA intermediate. The proton acceptor active site deprotonates the incoming PreQ1, allowing a nucleophilic attack on the C1' of the ribose to form the product. After dissociation, two additional enzymatic reactions on the tRNA convert PreQ1 to queuine (Q), resulting in the hypermodified nucleoside queuosine (7-(((4,5-cis-dihydroxy-2-cyclopenten-1-yl)amino)methyl)-7-deazaguanosine). This is Queuine tRNA-ribosyltransferase from Thermosipho africanus (strain TCF52B).